An 81-amino-acid polypeptide reads, in one-letter code: uncharacterized protein (81 aa).

The segment at 1-58 (MPQSKQQFKRQGARQRDSKGKFVKARTGMATAPPAAVSTAAPTASTMTPTGSSTTATI) is disordered. Residues 30–58 (ATAPPAAVSTAAPTASTMTPTGSSTTATI) show a composition bias toward low complexity.

This is an uncharacterized protein from Caenorhabditis elegans.